The chain runs to 113 residues: P antigen family member 3 (113 aa).

Residues 1 to 12 show a composition bias toward basic residues; the sequence is MSGHQRTRSRSR. Disordered stretches follow at residues 1–61 and 78–113; these read MSGH…EGAL and SKTGGERGDGPNVKGEFLPNLEPVKIPEAGEGQPSV.

It belongs to the GAGE family.

The sequence is that of P antigen family member 3 (PAGE3) from Homo sapiens (Human).